Reading from the N-terminus, the 533-residue chain is Acyl-CoA-binding domain-containing protein 5 (533 aa).

In terms of domain architecture, ACB spans 42 to 131 (HETRFEAAVK…MKKILETMPM (90 aa)). Residues 53–62 (IQSLPKNGSF), 73–77 (YSFYK), lysine 99, and tyrosine 118 contribute to the an acyl-CoA site. The disordered stretch occupies residues 182–227 (TPNAKTVNGKAESSDSGAESEEEAAQEDPKRPEPRDSDKKMMKKSA). Phosphoserine occurs at positions 194, 195, 197, and 201. Positions 208–227 (EDPKRPEPRDSDKKMMKKSA) are enriched in basic and acidic residues. Phosphoserine is present on residues serine 244 and serine 314. The disordered stretch occupies residues 339–443 (GGNPSQPLES…ERWGSDRGSR (105 aa)). Basic and acidic residues predominate over residues 374-383 (GKGEVKRGGE). The residue at position 429 (serine 429) is a Phosphoserine. Positions 432-442 (DGERWGSDRGS) are enriched in basic and acidic residues. Positions 448 to 478 (EQIALVLMRLQEDMQNVLQRLHKLEMLAASQ) form a coiled coil. Lysine 470 carries the post-translational modification N6-acetyllysine. A helical transmembrane segment spans residues 503–525 (SPGALTFAIIWPFIAQWLVHLYY).

The protein belongs to the ATG37 family. Highly expressed in brain and liver. Lower levels of expression in spleen and heart.

Its subcellular location is the peroxisome membrane. Functionally, acyl-CoA binding protein which acts as the peroxisome receptor for pexophagy but is dispensable for aggrephagy and nonselective autophagy. Binds medium- and long-chain acyl-CoA esters. The chain is Acyl-CoA-binding domain-containing protein 5 (ACBD5) from Bos taurus (Bovine).